Reading from the N-terminus, the 458-residue chain is Argininosuccinate lyase (458 aa).

It belongs to the lyase 1 family. Argininosuccinate lyase subfamily.

The protein resides in the cytoplasm. The enzyme catalyses 2-(N(omega)-L-arginino)succinate = fumarate + L-arginine. It functions in the pathway amino-acid biosynthesis; L-arginine biosynthesis; L-arginine from L-ornithine and carbamoyl phosphate: step 3/3. The polypeptide is Argininosuccinate lyase (Salmonella heidelberg (strain SL476)).